The sequence spans 408 residues: Na(+)-translocating NADH-quinone reductase subunit F (408 aa).

The chain crosses the membrane as a helical span at residues 4–24 (VYLGVGMFTAIVLVLVLVILF). One can recognise a 2Fe-2S ferredoxin-type domain in the interval 33-127 (GDIIIGINGD…DMEIELDEEI (95 aa)). [2Fe-2S] cluster contacts are provided by Cys-70, Cys-76, Cys-79, and Cys-111. Residues 130–270 (IKKWECDVIS…SGPFGEFFAK (141 aa)) enclose the FAD-binding FR-type domain.

This sequence belongs to the NqrF family. Composed of six subunits; NqrA, NqrB, NqrC, NqrD, NqrE and NqrF. [2Fe-2S] cluster serves as cofactor. It depends on FAD as a cofactor.

The protein localises to the cell inner membrane. The catalysed reaction is a ubiquinone + n Na(+)(in) + NADH + H(+) = a ubiquinol + n Na(+)(out) + NAD(+). In terms of biological role, NQR complex catalyzes the reduction of ubiquinone-1 to ubiquinol by two successive reactions, coupled with the transport of Na(+) ions from the cytoplasm to the periplasm. The first step is catalyzed by NqrF, which accepts electrons from NADH and reduces ubiquinone-1 to ubisemiquinone by a one-electron transfer pathway. The protein is Na(+)-translocating NADH-quinone reductase subunit F of Shewanella denitrificans (strain OS217 / ATCC BAA-1090 / DSM 15013).